Reading from the N-terminus, the 347-residue chain is tRNA N6-adenosine threonylcarbamoyltransferase (347 aa).

Fe cation is bound by residues His-115 and His-119. Residues Leu-138 to Gly-142, Asp-171, Gly-184, and Asn-277 contribute to the substrate site. Fe cation is bound at residue Asp-305.

It belongs to the KAE1 / TsaD family. Requires Fe(2+) as cofactor.

The protein localises to the cytoplasm. It catalyses the reaction L-threonylcarbamoyladenylate + adenosine(37) in tRNA = N(6)-L-threonylcarbamoyladenosine(37) in tRNA + AMP + H(+). In terms of biological role, required for the formation of a threonylcarbamoyl group on adenosine at position 37 (t(6)A37) in tRNAs that read codons beginning with adenine. Is involved in the transfer of the threonylcarbamoyl moiety of threonylcarbamoyl-AMP (TC-AMP) to the N6 group of A37, together with TsaE and TsaB. TsaD likely plays a direct catalytic role in this reaction. This Polaromonas sp. (strain JS666 / ATCC BAA-500) protein is tRNA N6-adenosine threonylcarbamoyltransferase.